Reading from the N-terminus, the 134-residue chain is uncharacterized protein (134 aa).

Residues Lys10–Leu70 enclose the HTH tetR-type domain. The H-T-H motif DNA-binding region spans Thr33 to Phe52.

Its function is as follows. Unknown, does not seem to be involved in regulation of the ttgGHI or ttgVW operons. This is an uncharacterized protein from Pseudomonas putida (strain DOT-T1E).